Reading from the N-terminus, the 219-residue chain is Ribonuclease T (219 aa).

Positions 20–194 (VVIDIETAGF…YDSLQTANLF (175 aa)) constitute an Exonuclease domain. Mg(2+) contacts are provided by D23, E25, H181, and D186. H181 (proton donor/acceptor) is an active-site residue.

The protein belongs to the RNase T family. Homodimer. It depends on Mg(2+) as a cofactor.

Trims short 3' overhangs of a variety of RNA species, leaving a one or two nucleotide 3' overhang. Responsible for the end-turnover of tRNA: specifically removes the terminal AMP residue from uncharged tRNA (tRNA-C-C-A). Also appears to be involved in tRNA biosynthesis. The protein is Ribonuclease T of Buchnera aphidicola subsp. Schizaphis graminum (strain Sg).